The chain runs to 598 residues: Replication protein E1 (598 aa).

A Nuclear localization signal motif is present at residues 76–78; sequence KRK. Phosphoserine; by host occurs at positions 82 and 91. Residues 90–99 carry the Nuclear export signal motif; it reads LSPQLQAVKI. A DNA-binding region region spans residues 138–302; that stretch reads SQDGGGDINL…LVSHQAATTA (165 aa). Residues 401–551 form the SF3 helicase domain; sequence VNILSFLIVL…MPFLDDGSPM (151 aa). 427–434 lines the ATP pocket; that stretch reads GPPDTGKS. Residue lysine 508 forms a Glycyl lysine isopeptide (Lys-Gly) (interchain with G-Cter in SUMO) linkage. The tract at residues 573–598 is disordered; that stretch reads TDPEEESNGVPSRAFRCTSRSNSDSY.

The protein belongs to the papillomaviridae E1 protein family. As to quaternary structure, can form hexamers. Interacts with E2 protein; this interaction increases E1 DNA binding specificity. Interacts with host DNA polymerase subunit POLA2. Interacts with host single stranded DNA-binding protein RPA1. Interacts with host TOP1; this interaction stimulates the enzymatic activity of TOP1. In terms of processing, phosphorylated. Sumoylated.

It is found in the host nucleus. It carries out the reaction Couples ATP hydrolysis with the unwinding of duplex DNA by translocating in the 3'-5' direction.. The catalysed reaction is ATP + H2O = ADP + phosphate + H(+). Its function is as follows. ATP-dependent DNA 3'-5' helicase required for initiation of viral DNA replication. It forms a complex with the viral E2 protein. The E1-E2 complex binds to the replication origin which contains binding sites for both proteins. During the initial step, a dimer of E1 interacts with a dimer of protein E2 leading to a complex that binds the viral origin of replication with high specificity. Then, a second dimer of E1 displaces the E2 dimer in an ATP-dependent manner to form the E1 tetramer. Following this, two E1 monomers are added to each half of the site, which results in the formation of two E1 trimers on the viral ori. Subsequently, two hexamers will be created. The double hexamer acts as a bi-directional helicase machinery and unwinds the viral DNA and then recruits the host DNA polymerase to start replication. This is Replication protein E1 from Human papillomavirus 65.